Consider the following 254-residue polypeptide: Type II methyl-directed restriction enzyme DpnI (254 aa).

Belongs to the DpnI type II restriction endonuclease family.

It carries out the reaction Endonucleolytic cleavage of DNA to give specific double-stranded fragments with terminal 5'-phosphates.. In terms of biological role, an M and P subtype restriction enzyme that recognizes the double-stranded, methylated sequence 5'-G(Me)ATC-3' and cleaves after A-2. The chain is Type II methyl-directed restriction enzyme DpnI from Streptococcus pneumoniae serotype 4 (strain ATCC BAA-334 / TIGR4).